A 235-amino-acid chain; its full sequence is MVPETGLAPETGSSGTVAAVVPAAGSGERLAAGIPKAFCEIDGASMLARAVAGLLDSKVVDHVVVAVPADRVDEAKRLLPGQATVVAGGADRTASVRLALAAVPGNPAFVLVHDAARALTPPALIARVVQALRDGHRAVVPALPLHDTVKAVDANGVVLGTPERDGLRAVQTPQGFATDLLLRAYAAGAGTAGFTDDASLVEHVGGQVQVVDGDPLAFKITTQLDLLLAETIVRR.

This sequence belongs to the IspD/TarI cytidylyltransferase family. IspD subfamily.

The catalysed reaction is 2-C-methyl-D-erythritol 4-phosphate + CTP + H(+) = 4-CDP-2-C-methyl-D-erythritol + diphosphate. It functions in the pathway isoprenoid biosynthesis; isopentenyl diphosphate biosynthesis via DXP pathway; isopentenyl diphosphate from 1-deoxy-D-xylulose 5-phosphate: step 2/6. Functionally, catalyzes the formation of 4-diphosphocytidyl-2-C-methyl-D-erythritol from CTP and 2-C-methyl-D-erythritol 4-phosphate (MEP). The sequence is that of 2-C-methyl-D-erythritol 4-phosphate cytidylyltransferase from Mycolicibacterium paratuberculosis (strain ATCC BAA-968 / K-10) (Mycobacterium paratuberculosis).